The primary structure comprises 1671 residues: DENN domain-containing protein Crag (1671 aa).

The MABP domain occupies 39-195; sequence IEPITDIGVY…DVYLCYKKSM (157 aa). A uDENN domain is found at 187-364; the sequence is VYLCYKKSMY…DEVPFPAPSI (178 aa). One can recognise a cDENN domain in the interval 385-521; it reads PLPRSGAGFH…AARLLRQTLT (137 aa). The dDENN domain maps to 523–632; it reads LENAKPISYD…ERSFVSDGDH (110 aa). Disordered regions lie at residues 997–1160, 1245–1311, and 1415–1435; these read QQQQ…PVAS, ANST…RLSE, and VEES…ANGN. Composition is skewed to acidic residues over residues 1011-1023 and 1050-1061; these read GDDD…EDEY and YEADEEDEDEVD. Residues 1072 to 1089 are compositionally biased toward polar residues; the sequence is RVQSPTKISPRTPVTQND. A compositionally biased stretch (low complexity) spans 1100–1119; it reads AASATPTQETQQEQQHSQSQ. The segment covering 1136–1147 has biased composition (polar residues); that stretch reads RSATFDESTQIG. The segment covering 1254 to 1277 has biased composition (basic residues); that stretch reads NGHHPHGLHHGHHHPHHHHHHHSQ. Over residues 1281–1301 the composition is skewed to basic and acidic residues; the sequence is AEQEEHDAAVHEEGKLRRVSS.

Interacts with Cam. Interacts with Rab10. Interacts (via the DENN domains) with Rab11. In terms of tissue distribution, expressed in the adult head and body.

Its subcellular location is the cytoplasm. The protein resides in the cell cortex. It localises to the early endosome. The protein localises to the recycling endosome. It is found in the cytoplasmic granule. Functionally, calmodulin-binding protein that acts as a guanine exchange factor for Rab10 and Rab11. Essential for maintenance of adult photoreceptor cells. Upon light stimulation, required for trafficking of newly synthesized ninaE (Rh1) from the trans-Golgi network to rhabdomere membranes via Rab11-dependent vesicular transport. During egg development, essential for establishing and maintaining epithelial cell polarity by regulating the correct polarized deposition of basal membrane (BM) proteins in follicular epithelial (FE) cells. Functions by targeting Rab10 to the basal cytoplasm, where it restricts the secretion of BM proteins such as trol/Pcan and vkg/Coll IV to the basal surface. Appears to be involved in regulating the levels and distribution of the guanine nucleotide exchange factor strat, however the two proteins appear to have independent roles in regulating polarized BM protein secretion in the FE. The protein is DENN domain-containing protein Crag of Drosophila melanogaster (Fruit fly).